The following is a 1483-amino-acid chain: Protein ORF C (1483 aa).

Disordered regions lie at residues 135-268, 306-334, 383-506, 518-653, 680-911, 949-976, 1013-1061, and 1089-1299; these read LNDR…GRPP, VPYQ…LRPV, RRRA…FKRH, SIDD…DRNR, RQRR…TSVS, SSDD…RGGS, ALQQ…TDLI, and FSVA…QPSD. Positions 141 to 153 are enriched in low complexity; it reads AAGSAQRGSAGSR. A compositionally biased stretch (polar residues) spans 157–170; that stretch reads DNLTPTAADTTGAQ. Composition is skewed to low complexity over residues 190 to 206 and 220 to 251; these read ASNV…RRQQ and ARQQ…TTAT. Positions 252–264 are enriched in polar residues; sequence RQVFEQQGPSTIQ. 3 stretches are compositionally biased toward low complexity: residues 424–449, 474–483, and 529–541; these read SGQS…TTGT, SNEPSRQSQS, and TMTQ…STTR. A compositionally biased stretch (polar residues) spans 596 to 607; sequence GSVTTTQPSGQL. Residues 609 to 621 show a composition bias toward basic and acidic residues; sequence SDDRGRPAPERRQ. Over residues 622–640 the composition is skewed to polar residues; sequence QPTSRQTVAQTNIIPNTSG. Over residues 680–689 the composition is skewed to basic and acidic residues; it reads RQRRETEAEH. The span at 699–710 shows a compositional bias: polar residues; that stretch reads TGVTPQRSNNPF. Residues 740 to 749 show a composition bias toward basic and acidic residues; the sequence is SLREYRRRDP. Low complexity predominate over residues 754 to 774; it reads GRSYTDGSTTSDGDSSDNSWS. Polar residues predominate over residues 841-876; that stretch reads NLKSPSPRTKLTRSSSLKSPGTTTRDTQQTSHPLTR. Positions 894–909 are enriched in low complexity; that stretch reads DSGGSSDGNTGSSQTS. 2 stretches are compositionally biased toward polar residues: residues 1096–1109 and 1116–1125; these read GSTS…SSIP and GPSTMTSQSV. Over residues 1148–1158 the composition is skewed to low complexity; the sequence is SQSQPSSEQPA. A compositionally biased stretch (polar residues) spans 1188–1202; that stretch reads QPQSTVTNTQTQDVL. 2 stretches are compositionally biased toward low complexity: residues 1204–1226 and 1233–1251; these read SQGS…KTGS and KSAL…SGKS. The span at 1258 to 1276 shows a compositional bias: polar residues; that stretch reads AASSTDPTTKPTRKVSINA. Residues 1284–1299 show a composition bias toward low complexity; that stretch reads KSSTKQSTKTSTQPSD. The stretch at 1408-1438 forms a coiled coil; it reads AEQIRNLEVDELKILRQQVRERIANERQQQD. The interval 1454 to 1483 is disordered; that stretch reads DMLVSEESAAPTPLPMDTGRFTPKSDVDMS.

The sequence is that of Protein ORF C from Elephantid herpesvirus 1 (isolate Asian elephant/Berlin/Kiba/1998) (EIHV-1).